A 172-amino-acid chain; its full sequence is MKLPNILLTGTPGVGKTTLGKELASRSGLKYVNVGDLAREGQLYDGYDEEYGCPILDEDRVVDELEHQMQEGGVIVDYHGCDFFPERWFHIVFVLRTDNGVLYKRLETRGYNEKKLQDNIQCEIFQVLYEEAIASYKEEIVHQLPSNEPEQLEDNINQISKWIEQWVKDHNP.

5 residues coordinate ATP: G13, G15, K16, T17, and T18. The interval 33–56 (NVGDLAREGQLYDGYDEEYGCPIL) is NMPbind. The interval 108-118 (TRGYNEKKLQD) is LID. R109 serves as a coordination point for ATP.

Belongs to the adenylate kinase family. AK6 subfamily. In terms of assembly, monomer and homodimer. Interacts with small ribosomal subunit protein uS11. Not a structural component of 43S pre-ribosomes, but transiently interacts with them by binding to uS11. Interacts with COIL (via C-terminus).

Its subcellular location is the cytoplasm. It is found in the nucleus. The protein resides in the nucleoplasm. The protein localises to the cajal body. The enzyme catalyses AMP + ATP = 2 ADP. It catalyses the reaction ATP + H2O = ADP + phosphate + H(+). Functionally, broad-specificity nucleoside monophosphate (NMP) kinase that catalyzes the reversible transfer of the terminal phosphate group between nucleoside triphosphates and monophosphates. Also has ATPase activity. Involved in the late cytoplasmic maturation steps of the 40S ribosomal particles, specifically 18S rRNA maturation. While NMP activity is not required for ribosome maturation, ATPase activity is. Associates transiently with small ribosomal subunit protein uS11. ATP hydrolysis breaks the interaction with uS11. May temporarily remove uS11 from the ribosome to enable a conformational change of the ribosomal RNA that is needed for the final maturation step of the small ribosomal subunit. Its NMP activity may have a role in nuclear energy homeostasis. May be involved in regulation of Cajal body (CB) formation. This chain is Adenylate kinase isoenzyme 6, found in Mus musculus (Mouse).